Consider the following 332-residue polypeptide: Biotin synthase (332 aa).

In terms of domain architecture, Radical SAM core spans Arg51 to Arg278. [4Fe-4S] cluster-binding residues include Cys66, Cys70, and Cys73. The [2Fe-2S] cluster site is built by Cys110, Cys141, Cys201, and Arg273.

It belongs to the radical SAM superfamily. Biotin synthase family. In terms of assembly, homodimer. Requires [4Fe-4S] cluster as cofactor. The cofactor is [2Fe-2S] cluster.

It carries out the reaction (4R,5S)-dethiobiotin + (sulfur carrier)-SH + 2 reduced [2Fe-2S]-[ferredoxin] + 2 S-adenosyl-L-methionine = (sulfur carrier)-H + biotin + 2 5'-deoxyadenosine + 2 L-methionine + 2 oxidized [2Fe-2S]-[ferredoxin]. It functions in the pathway cofactor biosynthesis; biotin biosynthesis; biotin from 7,8-diaminononanoate: step 2/2. Its function is as follows. Catalyzes the conversion of dethiobiotin (DTB) to biotin by the insertion of a sulfur atom into dethiobiotin via a radical-based mechanism. This is Biotin synthase from Haemophilus influenzae (strain PittGG).